Here is a 1060-residue protein sequence, read N- to C-terminus: Desmoglein-1-beta (1060 aa).

Residues 1-23 (MDWHSFRIAALLLTSLVVLEVNS) form the signal peptide. The propeptide occupies 24–49 (EFQIQVRDHNAKNGTIKWHSIRRQKR). Cadherin domains follow at residues 50–157 (EWIK…PPVF), 158–269 (SMTT…IPYL), 270–389 (EQSS…RPGS), and 386–493 (RPGS…PGSD). The Extracellular portion of the chain corresponds to 50–567 (EWIKFAAACR…ITEDNVHFGP (518 aa)). Asn-110 carries an N-linked (GlcNAc...) (high mannose) asparagine glycan. An N-linked (GlcNAc...) asparagine glycan is attached at Asn-180. The tract at residues 490 to 560 (PGSDGGGSSS…PEPEPFDITE (71 aa)) is disordered. Over residues 492 to 503 (SDGGGSSSGSGG) the composition is skewed to gly residues. A compositionally biased stretch (polar residues) spans 510 to 519 (NGYQGTSTVG). Positions 525-537 (GSGGVTSSGGGSG) are enriched in gly residues. A compositionally biased stretch (acidic residues) spans 549 to 560 (DEPEPEPFDITE). A helical transmembrane segment spans residues 568–588 (AGIGLLIMGFLVLGLVPFLLI). At 589 to 1060 (CCDCGGAPGG…TKYSTVQYSK (472 aa)) the chain is on the cytoplasmic side. The segment covering 792–801 (PDPDSSWPPQ) has biased composition (low complexity). The interval 792-811 (PDPDSSWPPQSTEPMCPQST) is disordered. Desmoglein repeat repeat units lie at residues 835-861 (AYPSGPGVQHPLPIPDPLGYGNVTVRE), 862-891 (SYATSGTLKPSVHFHDNQQASNVVVTERVV), 892-921 (GPVPGADLHGMLEIPDLRDGTNVIVTERVI), 922-949 (APGSSLPTSLTIPNPRETSNVVVTERVI), and 950-978 (QPTSGMIGNLSMTPELSSAQNVIVTERVV).

In terms of assembly, interacts with DSC3; there is evidence to suggest that the interaction promotes cell-cell adhesion of keratinocytes. In terms of tissue distribution, expressed in epidermis.

The protein resides in the cell membrane. The protein localises to the cell junction. It is found in the desmosome. It localises to the cytoplasm. Its subcellular location is the nucleus. In terms of biological role, component of intercellular desmosome junctions. Involved in the interaction of plaque proteins and intermediate filaments mediating cell-cell adhesion. The sequence is that of Desmoglein-1-beta (Dsg1b) from Mus musculus (Mouse).